We begin with the raw amino-acid sequence, 254 residues long: Pimeloyl-[acyl-carrier protein] methyl ester esterase (254 aa).

The AB hydrolase-1 domain maps to 16-241 (LVLLHGWGMN…QSSHAPFMTE (226 aa)). Residues tryptophan 22, 82–83 (SL), and 143–147 (FMALQ) contribute to the substrate site. Serine 82 serves as the catalytic Nucleophile. Active-site residues include aspartate 207 and histidine 235. Histidine 235 lines the substrate pocket.

This sequence belongs to the AB hydrolase superfamily. Carboxylesterase BioH family. Monomer.

It is found in the cytoplasm. The enzyme catalyses 6-carboxyhexanoyl-[ACP] methyl ester + H2O = 6-carboxyhexanoyl-[ACP] + methanol + H(+). The protein operates within cofactor biosynthesis; biotin biosynthesis. In terms of biological role, the physiological role of BioH is to remove the methyl group introduced by BioC when the pimeloyl moiety is complete. It allows to synthesize pimeloyl-ACP via the fatty acid synthetic pathway through the hydrolysis of the ester bonds of pimeloyl-ACP esters. The chain is Pimeloyl-[acyl-carrier protein] methyl ester esterase from Vibrio campbellii (strain ATCC BAA-1116).